A 63-amino-acid polypeptide reads, in one-letter code: Large ribosomal subunit protein bL28 (63 aa).

Belongs to the bacterial ribosomal protein bL28 family.

This is Large ribosomal subunit protein bL28 from Desulfosudis oleivorans (strain DSM 6200 / JCM 39069 / Hxd3) (Desulfococcus oleovorans).